The chain runs to 278 residues: Putative carbamate hydrolase RutD (278 aa).

This sequence belongs to the AB hydrolase superfamily. Hydrolase RutD family.

The enzyme catalyses carbamate + 2 H(+) = NH4(+) + CO2. Functionally, involved in pyrimidine catabolism. May facilitate the hydrolysis of carbamate, a reaction that can also occur spontaneously. This chain is Putative carbamate hydrolase RutD, found in Yersinia enterocolitica serotype O:8 / biotype 1B (strain NCTC 13174 / 8081).